We begin with the raw amino-acid sequence, 834 residues long: Copper-exporting P-type ATPase (834 aa).

At 2-186 the chain is on the cytoplasmic side; that stretch reads SQTIDLTLDG…TAVATMKRFR (185 aa). HMA domains lie at 3–64 and 99–162; these read QTID…YDAS and DSQQ…YGAE. Residues Cys-14, Cys-17, Cys-110, and Cys-113 each contribute to the Cu(+) site. 2 consecutive short sequence motifs (CXXC motif) follow at residues 14–17 and 110–113; these read CGHC and CASC. A helical membrane pass occupies residues 187–207; sequence WQAIVALAVGIPVMVWGMIGD. Residues 208-217 lie on the Periplasmic; loop 1 side of the membrane; it reads NMMVTADNRS. The helical transmembrane segment at 218–238 threads the bilayer; the sequence is LWLVIGLITLAVMVFAGGHFY. Residues 239–253 lie on the Cytoplasmic side of the membrane; the sequence is RSAWKSLLNGAATMD. The chain crosses the membrane as a helical span at residues 254-274; it reads TLVALGTGVAWLYSMSVNLWP. Topologically, residues 275–283 are periplasmic; loop 2; that stretch reads QWFPMEARH. A helical membrane pass occupies residues 284–304; the sequence is LYYEASAMIIGLINLGHMLEA. Residues 305–437 lie on the Cytoplasmic side of the membrane; the sequence is RARQRSSKAL…EIGQLADKIS (133 aa). Residues 438-458 traverse the membrane as a helical segment; it reads AVFVPVVVVIALVSAAIWYFF. Over 459–463 the chain is Periplasmic; loop 3; that stretch reads GPAPQ. Residues 464-484 form a helical membrane-spanning segment; that stretch reads IVYTLVIATTVLIIACPCALG. The Cytoplasmic portion of the chain corresponds to 485 to 778; sequence LATPMSIISG…ATLHNMKQNL (294 aa). Residue Asp-523 is the 4-aspartylphosphate intermediate of the active site. Positions 720 and 724 each coordinate Mg(2+). A helical membrane pass occupies residues 779-799; the sequence is LGAFIYNSIGIPVAAGILWPF. Thr-800 is a topological domain (periplasmic; loop 4). Residues 801–821 traverse the membrane as a helical segment; it reads GTLLNPVVAGAAMALSSITVV. The Cytoplasmic portion of the chain corresponds to 822–834; that stretch reads SNANRLLRFKPKE.

The protein belongs to the cation transport ATPase (P-type) (TC 3.A.3) family. Type IB subfamily. As to quaternary structure, copper-exporting P-type ATPase interacts with apo-periplasmic copper chaperone CusF; when CusF is precharged with copper it binds very little CopA. The periplasmic loops of CopA, especially the first half of loop 1, play a large role in binding to CusF.

Its subcellular location is the cell inner membrane. The protein resides in the cytoplasm. The catalysed reaction is Cu(+)(in) + ATP + H2O = Cu(+)(out) + ADP + phosphate + H(+). Its activity is regulated as follows. Export is inhibited by vanadate. Phosphorylation is inhibited by vanadate and sensitive to KOH and hydroxylamine; it is not inhibited by azide. Phosphorylation is Cu(+) not Cu(2+)-dependent. ATPase activity is inhibited by bathocuproindisulfonate (BCDS), which chelates Cu(+) but not Cu(2+), and stimulated 3-4-fold by Cu(+). ATPase activity is inhibited by Cu(2+) plus DTT or Ag(+). Its function is as follows. Exports Cu(+) from the cytoplasm to the periplasm. Binds 2 Cu(+) ions per monomer, which are transferred to periplasmic copper chaperone CusF upon ATP hydrolysis. In vitro an excess of CusF over CopA is required for efficient transfer. May also be involved in silver export. In terms of biological role, mRNA is subject to programmed ribosomal frameshifting which produces a cytoplasmic copper chaperone CopA(Z) that corresponds to the first HMA domain. The soluble form is essential for cell survivial in the presence of CuSO(4); in growth competition experiments between wild-type and a version that prevents expression of CopA(Z) after 50 generations the non-CopA(Z) version is nearly extinct. The first HMA domain (residues 1-70) can be replaced by B.subtilis Cu chaperone CopZ. This chain is Copper-exporting P-type ATPase, found in Escherichia coli (strain K12).